The following is a 257-amino-acid chain: Protein vip1 (257 aa).

An RRM domain is found at 3 to 76 (NQVIVTNISP…NKIQITSEDG (74 aa)). Positions 74 to 99 (EDGGAASTTDQGGAGGDQAARQEDKP) are disordered. A compositionally biased stretch (low complexity) spans 75–84 (DGGAASTTDQ). Serine 132 and serine 177 each carry phosphoserine. Positions 217–257 (ARRLADAKNQAEGTASPASSTPTAPAEKEPTAPTTESKTTE) are disordered. Phosphothreonine is present on threonine 230. A compositionally biased stretch (low complexity) spans 230–257 (TASPASSTPTAPAEKEPTAPTTESKTTE). A phosphoserine mark is found at serine 232 and serine 235.

This chain is Protein vip1 (vip1), found in Schizosaccharomyces pombe (strain 972 / ATCC 24843) (Fission yeast).